A 518-amino-acid polypeptide reads, in one-letter code: ATP synthase subunit beta 2 (518 aa).

ATP is bound at residue Gly154–Thr161. The interval Ile455–Ser518 is disordered. Basic and acidic residues-rich tracts occupy residues Pro473 to Pro485 and Pro507 to Ser518.

It belongs to the ATPase alpha/beta chains family. As to quaternary structure, F-type ATPases have 2 components, CF(1) - the catalytic core - and CF(0) - the membrane proton channel. CF(1) has five subunits: alpha(3), beta(3), gamma(1), delta(1), epsilon(1). CF(0) has three main subunits: a(1), b(2) and c(9-12). The alpha and beta chains form an alternating ring which encloses part of the gamma chain. CF(1) is attached to CF(0) by a central stalk formed by the gamma and epsilon chains, while a peripheral stalk is formed by the delta and b chains.

It is found in the cell inner membrane. It catalyses the reaction ATP + H2O + 4 H(+)(in) = ADP + phosphate + 5 H(+)(out). In terms of biological role, produces ATP from ADP in the presence of a proton gradient across the membrane. The catalytic sites are hosted primarily by the beta subunits. In Albidiferax ferrireducens (strain ATCC BAA-621 / DSM 15236 / T118) (Rhodoferax ferrireducens), this protein is ATP synthase subunit beta 2.